Here is a 207-residue protein sequence, read N- to C-terminus: Outer-membrane lipoprotein LolB (207 aa).

Residues 1–21 form the signal peptide; the sequence is MPLPDFRLIRLLPLAALVLTA. Cys22 carries the N-palmitoyl cysteine lipid modification. A lipid anchor (S-diacylglycerol cysteine) is attached at Cys22.

The protein belongs to the LolB family. Monomer.

It is found in the cell outer membrane. Plays a critical role in the incorporation of lipoproteins in the outer membrane after they are released by the LolA protein. The polypeptide is Outer-membrane lipoprotein LolB (Shigella dysenteriae serotype 1 (strain Sd197)).